A 353-amino-acid polypeptide reads, in one-letter code: Holliday junction branch migration complex subunit RuvB (353 aa).

The segment at 1-182 (MPERLITPKG…FGIVQRLEFY (182 aa)) is large ATPase domain (RuvB-L). ATP-binding positions include Ile-21, Arg-22, Gly-63, Lys-66, Thr-67, Thr-68, 129–131 (EDF), Arg-172, Tyr-182, and Arg-219. Mg(2+) is bound at residue Thr-67. A small ATPAse domain (RuvB-S) region spans residues 183-253 (NVQDLTRIVQ…VADRALDLLD (71 aa)). Positions 256–353 (VQGFDAQDRR…QEEGGGEGKL (98 aa)) are head domain (RuvB-H). 3 residues coordinate DNA: Arg-292, Arg-311, and Arg-316.

It belongs to the RuvB family. As to quaternary structure, homohexamer. Forms an RuvA(8)-RuvB(12)-Holliday junction (HJ) complex. HJ DNA is sandwiched between 2 RuvA tetramers; dsDNA enters through RuvA and exits via RuvB. An RuvB hexamer assembles on each DNA strand where it exits the tetramer. Each RuvB hexamer is contacted by two RuvA subunits (via domain III) on 2 adjacent RuvB subunits; this complex drives branch migration. In the full resolvosome a probable DNA-RuvA(4)-RuvB(12)-RuvC(2) complex forms which resolves the HJ.

It is found in the cytoplasm. It carries out the reaction ATP + H2O = ADP + phosphate + H(+). In terms of biological role, the RuvA-RuvB-RuvC complex processes Holliday junction (HJ) DNA during genetic recombination and DNA repair, while the RuvA-RuvB complex plays an important role in the rescue of blocked DNA replication forks via replication fork reversal (RFR). RuvA specifically binds to HJ cruciform DNA, conferring on it an open structure. The RuvB hexamer acts as an ATP-dependent pump, pulling dsDNA into and through the RuvAB complex. RuvB forms 2 homohexamers on either side of HJ DNA bound by 1 or 2 RuvA tetramers; 4 subunits per hexamer contact DNA at a time. Coordinated motions by a converter formed by DNA-disengaged RuvB subunits stimulates ATP hydrolysis and nucleotide exchange. Immobilization of the converter enables RuvB to convert the ATP-contained energy into a lever motion, pulling 2 nucleotides of DNA out of the RuvA tetramer per ATP hydrolyzed, thus driving DNA branch migration. The RuvB motors rotate together with the DNA substrate, which together with the progressing nucleotide cycle form the mechanistic basis for DNA recombination by continuous HJ branch migration. Branch migration allows RuvC to scan DNA until it finds its consensus sequence, where it cleaves and resolves cruciform DNA. The sequence is that of Holliday junction branch migration complex subunit RuvB from Thioalkalivibrio sulfidiphilus (strain HL-EbGR7).